Consider the following 294-residue polypeptide: 4-hydroxy-tetrahydrodipicolinate synthase (294 aa).

Pyruvate is bound at residue threonine 47. The Proton donor/acceptor role is filled by tyrosine 135. Residue lysine 163 is the Schiff-base intermediate with substrate of the active site. Residue isoleucine 205 coordinates pyruvate.

This sequence belongs to the DapA family. In terms of assembly, homotetramer; dimer of dimers.

It is found in the cytoplasm. It catalyses the reaction L-aspartate 4-semialdehyde + pyruvate = (2S,4S)-4-hydroxy-2,3,4,5-tetrahydrodipicolinate + H2O + H(+). Its pathway is amino-acid biosynthesis; L-lysine biosynthesis via DAP pathway; (S)-tetrahydrodipicolinate from L-aspartate: step 3/4. Catalyzes the condensation of (S)-aspartate-beta-semialdehyde [(S)-ASA] and pyruvate to 4-hydroxy-tetrahydrodipicolinate (HTPA). The polypeptide is 4-hydroxy-tetrahydrodipicolinate synthase (Rickettsia typhi (strain ATCC VR-144 / Wilmington)).